Consider the following 1011-residue polypeptide: Unconventional myosin ID (1011 aa).

Positions alanine 7–asparagine 690 constitute a Myosin motor domain. Residue glycine 100–threonine 107 coordinates ATP. Positions methionine 567–aspartate 589 are actin-binding. IQ domains are found at residues proline 694–lysine 714 and methionine 716–glutamine 736. Residues alanine 806–alanine 1007 enclose the TH1 domain.

This sequence belongs to the TRAFAC class myosin-kinesin ATPase superfamily. Myosin family. Binds to F-actin. Interacts with arm. Interacts with shg. Interacts with ds (via intracellular region). In terms of tissue distribution, in the embryo, expressed in gastric caeca, midgut cells of the proventriculus, and in the mid and hindgut. In the larval gut brush border, expression is in the terminal web domain. In the adult gut brush border, expression remains in the web domain and has also moved into the microvilli. Also expressed at low levels in follicle cells during oogenesis.

It is found in the cytoplasm. The protein resides in the cell cortex. Its subcellular location is the cytoskeleton. The protein localises to the cell membrane. It localises to the cell junction. It is found in the adherens junction. The protein resides in the cell projection. In terms of biological role, unconventional myosin that functions as actin-based motor protein with ATPase activity. Binds to membranes enriched in phosphatidylinositol 4-5-bisphosphate, and can glide along actin filaments when anchored to a lipid bilayer. Generates left-right asymmetry at the level of single cells, organs and the whole body via its interaction with the actin cytoskeleton, both in the embryo and the adult. Normal left-right asymmetry of the larval midgut and hindgut requires expression in the embryonic hindgut epithelium during a critical time period, 10 to 12.75 hours after egg laying. This period corresponds to a late stage of germband retraction, and precedes left-right asymmetric morphogenesis. Expression in segment H1 of the imaginal ring is required at 0 to 24 hours after pupation for changes of cell shape and orientation in the H2 segment, which then gives rise to normal, dextral looping of the adult hindgut. Required during a critical period, 126-132 hours after egg laying, for normal, dextral rotation of the adult male genitalia. Has a double role by promoting dextral rotation in the posterior compartment of segment A8 of the male genital disk, and in repressing sinistral looping in the anterior compartment. This Drosophila melanogaster (Fruit fly) protein is Unconventional myosin ID.